We begin with the raw amino-acid sequence, 234 residues long: MDYTPRLQPARLIKRYKRFLADVVTPEGETLTLHCANTGAMTGCATPGDTVWYSTSDNPKRKYPHSWELTETQQNHWICVNTLRANTLLYEALLENRVEELSGYSDVKTEVRYGTENSRVDLLLQAPDKIDCYIEVKSVTLLQHECGYFPDAVTLRGQKHLRELQQMVSNGKRAVLFFAVLHSGIQQVSPARHIDSRYAELFTEAQRAGVEILCYGSTLCPDGITLTHKLPLLG.

It belongs to the SfsA family.

This is Sugar fermentation stimulation protein homolog from Pectobacterium carotovorum subsp. carotovorum (strain PC1).